Consider the following 221-residue polypeptide: Cysteine-rich venom protein (221 aa).

A signal peptide is located at residue Gly1. The SCP domain maps to 21-148; that stretch reads DLHNSLRRSV…EYKYFYVCQY (128 aa). 8 disulfide bridges follow: Cys57-Cys135, Cys74-Cys149, Cys130-Cys146, Cys168-Cys175, Cys171-Cys180, Cys184-Cys216, Cys193-Cys210, and Cys201-Cys214. The 33-residue stretch at 184–216 folds into the ShKT domain; sequence CTHEDKFTNCKDLVKQGCNNNYLKTNCPASCSC.

It belongs to the CRISP family. As to expression, expressed by the venom gland.

It localises to the secreted. Blocks contraction of smooth muscle elicited by high potassium-induced depolarization, but does not block caffeine-stimulated contraction. May target voltage-gated calcium channels in smooth muscle. This Vipera nikolskii (Nikolsky's adder) protein is Cysteine-rich venom protein.